The primary structure comprises 650 residues: Acetyl-coenzyme A synthetase (650 aa).

Residues 191–194, Thr311, and Asn335 each bind CoA; that span reads RAGR. Residues 387–389, 411–416, Asp500, and Arg515 each bind ATP; these read GEP and DTWWQT. Ser523 is a binding site for CoA. An ATP-binding site is contributed by Arg526. Mg(2+)-binding residues include Val537, His539, and Val542. Arg584 provides a ligand contact to CoA. An N6-acetyllysine modification is found at Lys609.

Belongs to the ATP-dependent AMP-binding enzyme family. Mg(2+) serves as cofactor. In terms of processing, acetylated. Deacetylation by the SIR2-homolog deacetylase activates the enzyme.

It catalyses the reaction acetate + ATP + CoA = acetyl-CoA + AMP + diphosphate. Functionally, catalyzes the conversion of acetate into acetyl-CoA (AcCoA), an essential intermediate at the junction of anabolic and catabolic pathways. AcsA undergoes a two-step reaction. In the first half reaction, AcsA combines acetate with ATP to form acetyl-adenylate (AcAMP) intermediate. In the second half reaction, it can then transfer the acetyl group from AcAMP to the sulfhydryl group of CoA, forming the product AcCoA. This is Acetyl-coenzyme A synthetase from Shewanella halifaxensis (strain HAW-EB4).